Reading from the N-terminus, the 117-residue chain is Protein RALF-like 32 (117 aa).

The N-terminal stretch at 1 to 26 (MEIKPSRIFSTITIFFLCLLLAHVTS) is a signal peptide. A propeptide spans 27–64 (KASSSSLCNGSVAECSSMVETEEMSVIMESWSSQRLTE) (removed in mature form). N-linked (GlcNAc...) asparagine glycosylation occurs at asparagine 35. Residues 77-107 (RNQPACDGGKRGESYSTQCLPPPSNPYSRGC) form a disordered region. 2 disulfide bridges follow: cysteine 82/cysteine 95 and cysteine 107/cysteine 113.

This sequence belongs to the plant rapid alkalinization factor (RALF) family. Proteolytically cleaved, probably by S1P, a subtilisin-like serine protease (subtilase).

It is found in the secreted. In terms of biological role, cell signaling peptide that may regulate plant stress, growth, and development. Mediates a rapid alkalinization of extracellular space by mediating a transient increase in the cytoplasmic Ca(2+) concentration leading to a calcium-dependent signaling events through a cell surface receptor and a concomitant activation of some intracellular mitogen-activated protein kinases. This Arabidopsis thaliana (Mouse-ear cress) protein is Protein RALF-like 32 (RALFL32).